Here is a 274-residue protein sequence, read N- to C-terminus: Protein RecA (274 aa).

43-50 (GPESSGKT) contacts ATP.

This sequence belongs to the RecA family.

The protein resides in the cytoplasm. Can catalyze the hydrolysis of ATP in the presence of single-stranded DNA, the ATP-dependent uptake of single-stranded DNA by duplex DNA, and the ATP-dependent hybridization of homologous single-stranded DNAs. It interacts with LexA causing its activation and leading to its autocatalytic cleavage. This is Protein RecA from Neisseria mucosa.